The sequence spans 428 residues: 3-phosphoshikimate 1-carboxyvinyltransferase (428 aa).

3 residues coordinate 3-phosphoshikimate: Lys22, Ser23, and Arg27. Lys22 lines the phosphoenolpyruvate pocket. Phosphoenolpyruvate is bound by residues Gly96 and Arg124. 7 residues coordinate 3-phosphoshikimate: Ser169, Ser170, Gln171, Ser197, Asp313, Asn336, and Lys340. Gln171 is a binding site for phosphoenolpyruvate. Asp313 serves as the catalytic Proton acceptor. 3 residues coordinate phosphoenolpyruvate: Arg344, Arg386, and Lys411.

This sequence belongs to the EPSP synthase family. As to quaternary structure, monomer.

It is found in the cytoplasm. The catalysed reaction is 3-phosphoshikimate + phosphoenolpyruvate = 5-O-(1-carboxyvinyl)-3-phosphoshikimate + phosphate. It functions in the pathway metabolic intermediate biosynthesis; chorismate biosynthesis; chorismate from D-erythrose 4-phosphate and phosphoenolpyruvate: step 6/7. Catalyzes the transfer of the enolpyruvyl moiety of phosphoenolpyruvate (PEP) to the 5-hydroxyl of shikimate-3-phosphate (S3P) to produce enolpyruvyl shikimate-3-phosphate and inorganic phosphate. This is 3-phosphoshikimate 1-carboxyvinyltransferase from Xenorhabdus nematophila (strain ATCC 19061 / DSM 3370 / CCUG 14189 / LMG 1036 / NCIMB 9965 / AN6).